The following is a 283-amino-acid chain: 4-diphosphocytidyl-2-C-methyl-D-erythritol kinase (283 aa).

Residue Lys10 is part of the active site. 99–109 contacts ATP; sequence PMGGGLGGGSS. Asp141 is an active-site residue.

The protein belongs to the GHMP kinase family. IspE subfamily. In terms of assembly, homodimer.

The catalysed reaction is 4-CDP-2-C-methyl-D-erythritol + ATP = 4-CDP-2-C-methyl-D-erythritol 2-phosphate + ADP + H(+). The protein operates within isoprenoid biosynthesis; isopentenyl diphosphate biosynthesis via DXP pathway; isopentenyl diphosphate from 1-deoxy-D-xylulose 5-phosphate: step 3/6. In terms of biological role, catalyzes the phosphorylation of the position 2 hydroxy group of 4-diphosphocytidyl-2C-methyl-D-erythritol. This Salmonella choleraesuis (strain SC-B67) protein is 4-diphosphocytidyl-2-C-methyl-D-erythritol kinase.